A 209-amino-acid chain; its full sequence is Kynurenine formamidase (209 aa).

Trp-19 serves as a coordination point for substrate. Zn(2+) is bound by residues His-49, His-53, and Asp-55. His-59 (proton donor/acceptor) is an active-site residue. Residues His-160 and Glu-172 each contribute to the Zn(2+) site.

This sequence belongs to the Cyclase 1 superfamily. KynB family. Homodimer. Requires Zn(2+) as cofactor.

The catalysed reaction is N-formyl-L-kynurenine + H2O = L-kynurenine + formate + H(+). The protein operates within amino-acid degradation; L-tryptophan degradation via kynurenine pathway; L-kynurenine from L-tryptophan: step 2/2. Its function is as follows. Catalyzes the hydrolysis of N-formyl-L-kynurenine to L-kynurenine, the second step in the kynurenine pathway of tryptophan degradation. The chain is Kynurenine formamidase from Geobacillus thermodenitrificans (strain NG80-2).